Here is a 642-residue protein sequence, read N- to C-terminus: Threonine--tRNA ligase (642 aa).

A TGS domain is found at 1 to 61 (MPVITLPDGS…ETDAELSIIT (61 aa)). A catalytic region spans residues 243–534 (DHRKIGKQLD…LIEEYAGRFP (292 aa)). Zn(2+)-binding residues include cysteine 334, histidine 385, and histidine 511.

This sequence belongs to the class-II aminoacyl-tRNA synthetase family. As to quaternary structure, homodimer. Zn(2+) is required as a cofactor.

Its subcellular location is the cytoplasm. It carries out the reaction tRNA(Thr) + L-threonine + ATP = L-threonyl-tRNA(Thr) + AMP + diphosphate + H(+). Functionally, catalyzes the attachment of threonine to tRNA(Thr) in a two-step reaction: L-threonine is first activated by ATP to form Thr-AMP and then transferred to the acceptor end of tRNA(Thr). Also edits incorrectly charged L-seryl-tRNA(Thr). This chain is Threonine--tRNA ligase, found in Shewanella baltica (strain OS195).